The chain runs to 310 residues: Serine/threonine-protein phosphatase 4 catalytic subunit (310 aa).

Residues Asp53, His55, Asp81, and Asn113 each contribute to the Mn(2+) site. The active-site Proton donor is His114. Mn(2+) is bound by residues His163 and His237. Leu310 carries the leucine methyl ester modification.

This sequence belongs to the PPP phosphatase family. PP-4 (PP-X) subfamily. Catalytic subunit of the histone H2A phosphatase complex (HTP-C) containing PPH3, PSY2 and PSY4. Mn(2+) is required as a cofactor.

The protein resides in the cytoplasm. Its subcellular location is the nucleus. It carries out the reaction O-phospho-L-seryl-[protein] + H2O = L-seryl-[protein] + phosphate. The enzyme catalyses O-phospho-L-threonyl-[protein] + H2O = L-threonyl-[protein] + phosphate. In terms of biological role, involved in the dephosphorylation and activation of the transcription factor GLN3 in response to nutrient availability. Forms the histone H2A phosphatase complex in association with the regulatory subunits PSY2 and PSY4, which dephosphorylates H2AS128ph (gamma-H2A) that has been displaced from sites of DNA lesions in the double-stranded DNA break repair process. Dephosphorylation is necessary for efficient recovery from the DNA damage checkpoint. The polypeptide is Serine/threonine-protein phosphatase 4 catalytic subunit (PPH3) (Eremothecium gossypii (strain ATCC 10895 / CBS 109.51 / FGSC 9923 / NRRL Y-1056) (Yeast)).